The sequence spans 421 residues: MEF2-activating motif and SAP domain-containing transcriptional regulator (421 aa).

An MEF2-binding motif is present at residues 12–28; that stretch reads IIRSKFRSVLQLRIHRR. Disordered regions lie at residues 104 to 156, 188 to 296, and 322 to 406; these read PPEQ…PPSH, KAML…ASLT, and DQVE…ADLS. An SAP domain is found at 165-199; it reads LEELTVSELRQQLRLRGLPVSGTKAMLLERMRGGT. Over residues 191–214 the composition is skewed to basic and acidic residues; sequence LLERMRGGTPPRERPKPRREDKEA. Residues 208-421 form a transcription activation region; that stretch reads RREDKEAAAP…LLWELLPDPW (214 aa). The span at 230–241 shows a compositional bias: polar residues; that stretch reads RLPSTVKASATN. The span at 260-292 shows a compositional bias: pro residues; the sequence is ASVPAPTPSPALAPTPTPAPVPAPAPAPFPTPP. Positions 347–372 are enriched in low complexity; that stretch reads SPDSEGFSSVFSSSLPSPTSSLSPSP.

As to quaternary structure, interacts with MEF2C. As to expression, expressed in skeletal muscle, brain, placenta and spleen.

The protein resides in the nucleus. Its function is as follows. Transcriptional coactivator. Stimulates the transcriptional activity of MEF2C. Stimulates MYOD1 activity in part via MEF2, resulting in an enhancement of skeletal muscle differentiation. The protein is MEF2-activating motif and SAP domain-containing transcriptional regulator (Mamstr) of Mus musculus (Mouse).